Consider the following 97-residue polypeptide: Cobalt transport protein CbiN (97 aa).

The next 2 helical transmembrane spans lie at valine 6–leucine 26 and serine 68–tyrosine 88.

The protein belongs to the CbiN family. As to quaternary structure, forms an energy-coupling factor (ECF) transporter complex composed of an ATP-binding protein (A component, CbiO), a transmembrane protein (T component, CbiQ) and 2 possible substrate-capture proteins (S components, CbiM and CbiN) of unknown stoichimetry.

It is found in the cell membrane. It functions in the pathway cofactor biosynthesis; adenosylcobalamin biosynthesis. Functionally, part of the energy-coupling factor (ECF) transporter complex CbiMNOQ involved in cobalt import. The sequence is that of Cobalt transport protein CbiN from Methanococcus maripaludis (strain C7 / ATCC BAA-1331).